Reading from the N-terminus, the 376-residue chain is PqqA peptide cyclase (376 aa).

Residues 7–222 (VGLPLWLLAE…TNEYRDKLKA (216 aa)) form the Radical SAM core domain. The [4Fe-4S] cluster site is built by C21, C25, and C28.

This sequence belongs to the radical SAM superfamily. PqqE family. As to quaternary structure, interacts with PqqD. The interaction is necessary for activity of PqqE. The cofactor is [4Fe-4S] cluster.

It catalyses the reaction [PQQ precursor protein] + S-adenosyl-L-methionine = E-Y cross-linked-[PQQ precursor protein] + 5'-deoxyadenosine + L-methionine + H(+). It participates in cofactor biosynthesis; pyrroloquinoline quinone biosynthesis. Its function is as follows. Catalyzes the cross-linking of a glutamate residue and a tyrosine residue in the PqqA protein as part of the biosynthesis of pyrroloquinoline quinone (PQQ). This chain is PqqA peptide cyclase, found in Pseudomonas putida (strain ATCC 700007 / DSM 6899 / JCM 31910 / BCRC 17059 / LMG 24140 / F1).